We begin with the raw amino-acid sequence, 706 residues long: Choline transporter-like protein 2 (706 aa).

Over 1–33 (MGGERQHYYGKHGTPQKYDPTFKGPIYHRGCTD) the chain is Cytoplasmic. T14 is modified (phosphothreonine). A helical membrane pass occupies residues 34–54 (VICCVFLLLAIVGYVAVGIIA). Residues 55-232 (WTHGDPRKVI…RIFEDYTVSW (178 aa)) are Extracellular-facing. N-linked (GlcNAc...) asparagine glycosylation is found at N187 and N200. Residues 233 to 253 (YWIIIGLVIAMVLSLLFIILL) traverse the membrane as a helical segment. Residues 254–256 (RFL) are Cytoplasmic-facing. A helical membrane pass occupies residues 257-277 (AGIMVWVMIVMVILVLGYGIF). Residues 278-315 (HCYMEYSRLRGEAGSDISLVDLGFQTDLRVYLHLRQTW) lie on the Extracellular side of the membrane. Residues 316–336 (MAFMIILSILEVIIILLLIFL) form a helical membrane-spanning segment. Over 337–364 (RKRILIAIALIKEASRAVGYVMCSMLYP) the chain is Cytoplasmic. Residues 365 to 385 (LVTFLLLCLCIAYWASTAIFL) traverse the membrane as a helical segment. Over 386 to 440 (STSNEAVYKIFSDTDCQAVGKTCNPENFSSSSEFHLCPGAHCQFAFYGGESTYHR) the chain is Extracellular. The chain crosses the membrane as a helical span at residues 441 to 461 (ALLGLQIFNAFMFFWLANFVL). Residues 462 to 504 (ALGQVTLAGAFASYYWALKKPDDLPAFPLFSAFGRALRYHTGS) lie on the Cytoplasmic side of the membrane. Residues 505 to 525 (LAFGSLLLAIVQIIRVMLEYL) traverse the membrane as a helical segment. At 526–563 (DQRLKAAENKFAKFLMTCLKCCFWCLEKFIKFLNRNAY) the chain is on the extracellular side. A helical transmembrane segment spans residues 564–584 (IMIAIYGTNFCTSARNAFFLL). The Cytoplasmic segment spans residues 585–599 (MRNIIRVAVLDKVTD). A helical transmembrane segment spans residues 600–620 (FLFLLGKLLIVGSVGILAFFF). Topologically, residues 621–638 (FTHRIRIVQDTAPPLNYY) are extracellular. A helical transmembrane segment spans residues 639–659 (WVPILTVIVGSYLIAHGFFSV). The Cytoplasmic portion of the chain corresponds to 660–706 (YGMCVDTLFLCFLEDLERNDGSMERPYFMSPTLKRLLNKTNRKPAES).

The protein belongs to the CTL (choline transporter-like) family. Interacts with COCH. In terms of processing, N-glycosylated.

The protein resides in the cell membrane. Its subcellular location is the mitochondrion outer membrane. It carries out the reaction choline(out) + n H(+)(in) = choline(in) + n H(+)(out). The enzyme catalyses ethanolamine(out) + n H(+)(in) = ethanolamine(in) + n H(+)(out). Choline/H+ antiporter, mainly in mitochodria. Also acts as a low-affinity ethanolamine/H+ antiporter, regulating the supply of extracellular ethanolamine (Etn) for the CDP-Etn pathway, redistribute intracellular Etn and balance the CDP-Cho and CDP-Etn arms of the Kennedy pathway. The protein is Choline transporter-like protein 2 (SLC44A2) of Sus scrofa (Pig).